The chain runs to 192 residues: PBAN-type neuropeptides (192 aa).

Positions 1–23 are cleaved as a signal peptide; sequence MYKTNIVFNVLALALFSIFFASC. Position 47 is a leucine amide (leucine 47). Positions 51 to 94 are excised as a propeptide; it reads SMKPSTEDNRQTFLRLLEAADALKFYYDQLPYERQADEPETKVT. Leucine amide is present on residues leucine 103, leucine 122, leucine 158, and leucine 168. A propeptide spanning residues 171-192 is cleaved from the precursor; the sequence is ELSYDYPTKYRVARSVNKTMDN.

This sequence belongs to the pyrokinin family. In terms of tissue distribution, expression is restricted to the subesophageal ganglion.

It is found in the secreted. In terms of biological role, a hormone that controls sex pheromone production in females and pheromone responsiveness in male. Also mediates visceral muscle contractile activity (myotropic activity). Identical to MRCH which is implicated in the formation of both melanin in the cuticle and ommochrome in the epidermis of armyworm species. Functionally, diapause hormone (DH) is responsible for induction of embryonic diapause. Its function is as follows. The three SGNPS are far less active than DH in inducing diapause eggs. Beta-SGNP expressed higher pban activity than PBAN-I, but alpha- and gamma-SGNP were far less active in pheromonotropic activity. This is PBAN-type neuropeptides from Bombyx mori (Silk moth).